Reading from the N-terminus, the 623-residue chain is V-type proton ATPase catalytic subunit A (623 aa).

252–259 is an ATP binding site; the sequence is GAFGCGKT.

Belongs to the ATPase alpha/beta chains family. V-ATPase is a heteromultimeric enzyme composed of a peripheral catalytic V1 complex (components A to H) attached to an integral membrane V0 proton pore complex (components: a, c, c'', d and e). Binds to the deubiquitinating enzyme AMSH3.

Its subcellular location is the vacuole membrane. It catalyses the reaction ATP + H2O + 4 H(+)(in) = ADP + phosphate + 5 H(+)(out). Its function is as follows. Catalytic subunit of the peripheral V1 complex of vacuolar ATPase. V-ATPase vacuolar ATPase is responsible for acidifying a variety of intracellular compartments in eukaryotic cells. The chain is V-type proton ATPase catalytic subunit A (VHA-A) from Arabidopsis thaliana (Mouse-ear cress).